A 249-amino-acid polypeptide reads, in one-letter code: Orotidine 5'-phosphate decarboxylase (249 aa).

Substrate is bound by residues aspartate 18, lysine 40, 67-76 (DLKYHDIPNT), threonine 127, arginine 188, glutamine 197, glycine 217, and arginine 218. The active-site Proton donor is the lysine 69.

The protein belongs to the OMP decarboxylase family. Type 1 subfamily. In terms of assembly, homodimer.

The enzyme catalyses orotidine 5'-phosphate + H(+) = UMP + CO2. The protein operates within pyrimidine metabolism; UMP biosynthesis via de novo pathway; UMP from orotate: step 2/2. In terms of biological role, catalyzes the decarboxylation of orotidine 5'-monophosphate (OMP) to uridine 5'-monophosphate (UMP). This is Orotidine 5'-phosphate decarboxylase from Baumannia cicadellinicola subsp. Homalodisca coagulata.